A 108-amino-acid chain; its full sequence is uncharacterized protein (108 aa).

The segment covering 1–15 has biased composition (polar residues); the sequence is MSDSNSRLVYSTQTG. Residues 1 to 29 are disordered; the sequence is MSDSNSRLVYSTQTGRIEEPKTAPVRPKG. Residues 16–29 show a composition bias toward basic and acidic residues; the sequence is RIEEPKTAPVRPKG.

The protein belongs to the SUI1 family.

This is an uncharacterized protein from Salmonella typhi.